A 1465-amino-acid polypeptide reads, in one-letter code: Gag-Pol polyprotein (1465 aa).

Residue Gly2 is the site of N-myristoyl glycine; by host attachment. Positions 16–22 match the Nuclear export signal motif; sequence FEHIRLR. The Nuclear localization signal signature appears at 26–32; it reads KKKYQIK. The interval 116–144 is disordered; that stretch reads NAERNTTETSSGQKKNDKGVTVPPGGSQN. CCHC-type zinc fingers lie at residues 402–419 and 423–440; these read VKCY…QCPE and MRCL…DCRG. The 72-residue stretch at 532-603 folds into the Peptidase A2 domain; the sequence is IRALLDTGAD…TPINIIGRNI (72 aa). Asp537 acts as the For protease activity; shared with dimeric partner in catalysis. The region spanning 659–849 is the Reverse transcriptase domain; sequence EGKISKIGGE…PPYEWMGYKL (191 aa). Positions 725, 800, and 801 each coordinate Mg(2+). The tract at residues 842-850 is RT 'primer grip'; sequence YEWMGYKLW. The short motif at 1012–1028 is the Tryptophan repeat motif element; it reads WEQWWADYWQVSWIPDW. Positions 1048-1171 constitute an RNase H type-1 domain; the sequence is IPKEDVYYVD…IDKLVSQGMR (124 aa). Mg(2+) contacts are provided by Asp1057, Glu1092, Asp1112, and Asp1163. Residues 1177-1218 form an Integrase-type zinc finger; sequence EKIEEAQEEHERYHNNWRNLADTYGLPQIVAKEIVAMCPKCQ. Zn(2+) is bound by residues His1186, His1190, Cys1214, and Cys1217. Residues 1228 to 1378 enclose the Integrase catalytic domain; sequence VDASPGVWQM…TPAERLINMI (151 aa). Mg(2+) contacts are provided by Asp1238 and Asp1290. The segment at residues 1397 to 1444 is a DNA-binding region (integrase-type); that stretch reads FRVYYREGRDPVWKGPGQLIWKGEGAVVIKGGVELKEYPRRKAKIIKD.

Homotrimer. Interacts with gp41 (via C-terminus). As to quaternary structure, homodimer. The active site consists of two apposed aspartic acid residues. In terms of assembly, heterodimer of p66 RT and p51 RT (RT p66/p51). Heterodimerization of RT is essential for DNA polymerase activity. Despite the sequence identities, p66 RT and p51 RT have distinct folding. Homotetramer; may further associate as a homohexadecamer. It depends on Mg(2+) as a cofactor. Specific enzymatic cleavages by the viral protease yield mature proteins. The protease is released by autocatalytic cleavage. The polyprotein is cleaved during and after budding, this process is termed maturation. Proteolytic cleavage of p66 RT removes the RNase H domain to yield the p51 RT subunit. Post-translationally, capsid protein p24 is phosphorylated.

Its subcellular location is the virion. The protein localises to the host nucleus. It localises to the host cytoplasm. It is found in the host cell membrane. It carries out the reaction Specific for a P1 residue that is hydrophobic, and P1' variable, but often Pro.. The enzyme catalyses Endohydrolysis of RNA in RNA/DNA hybrids. Three different cleavage modes: 1. sequence-specific internal cleavage of RNA. Human immunodeficiency virus type 1 and Moloney murine leukemia virus enzymes prefer to cleave the RNA strand one nucleotide away from the RNA-DNA junction. 2. RNA 5'-end directed cleavage 13-19 nucleotides from the RNA end. 3. DNA 3'-end directed cleavage 15-20 nucleotides away from the primer terminus.. The catalysed reaction is 3'-end directed exonucleolytic cleavage of viral RNA-DNA hybrid.. It catalyses the reaction DNA(n) + a 2'-deoxyribonucleoside 5'-triphosphate = DNA(n+1) + diphosphate. With respect to regulation, the viral protease is inhibited by many synthetic protease inhibitors (PIs), such as amprenavir, atazanavir, indinavir, loprinavir, nelfinavir, ritonavir and saquinavir. RT can be inhibited either by nucleoside RT inhibitors (NRTIs) or by non nucleoside RT inhibitors (NNRTIs). NRTIs act as chain terminators, whereas NNRTIs inhibit DNA polymerization by binding a small hydrophobic pocket near the RT active site and inducing an allosteric change in this region. Classical NRTIs are abacavir, adefovir (PMEA), didanosine (ddI), lamivudine (3TC), stavudine (d4T), tenofovir (PMPA), zalcitabine (ddC), and zidovudine (AZT). Classical NNRTIs are atevirdine (BHAP U-87201E), delavirdine, efavirenz (DMP-266), emivirine (I-EBU), and nevirapine (BI-RG-587). The tritherapies used as a basic effective treatment of AIDS associate two NRTIs and one NNRTI. Use of protease inhibitors in tritherapy regimens permit more ambitious therapeutic strategies. Gag-Pol polyprotein and Gag polyprotein may regulate their own translation, by the binding genomic RNA in the 5'-UTR. At low concentration, Gag-Pol and Gag would promote translation, whereas at high concentration, the polyproteins encapsidate genomic RNA and then shut off translation. Functionally, matrix protein p17 has two main functions: in infected cell, it targets Gag and Gag-pol polyproteins to the plasma membrane via a multipartite membrane-binding signal, that includes its myristointegration complex. The myristoylation signal and the NLS exert conflicting influences its subcellular localization. The key regulation of these motifs might be phosphorylation of a portion of MA molecules on the C-terminal tyrosine at the time of virus maturation, by virion-associated cellular tyrosine kinase. Implicated in the release from host cell mediated by Vpu. In terms of biological role, capsid protein p24 forms the conical core that encapsulates the genomic RNA-nucleocapsid complex in the virion. The core is constituted by capsid protein hexamer subunits. The core is disassembled soon after virion entry. Interaction with host PPIA/CYPA protects the virus from restriction by host TRIM5-alpha and from an unknown antiviral activity in host cells. This capsid restriction by TRIM5 is one of the factors which restricts SIV to the simian species. Its function is as follows. Nucleocapsid protein p7 encapsulates and protects viral dimeric unspliced (genomic) RNA. Binds these RNAs through its zinc fingers. Facilitates rearangement of nucleic acid secondary structure during retrotranscription of genomic RNA. This capability is referred to as nucleic acid chaperone activity. The aspartyl protease mediates proteolytic cleavages of Gag and Gag-Pol polyproteins during or shortly after the release of the virion from the plasma membrane. Cleavages take place as an ordered, step-wise cascade to yield mature proteins. This process is called maturation. Displays maximal activity during the budding process just prior to particle release from the cell. Also cleaves Nef and Vif, probably concomitantly with viral structural proteins on maturation of virus particles. Hydrolyzes host EIF4GI and PABP1 in order to shut off the capped cellular mRNA translation. The resulting inhibition of cellular protein synthesis serves to ensure maximal viral gene expression and to evade host immune response. Functionally, reverse transcriptase/ribonuclease H (RT) is a multifunctional enzyme that converts the viral dimeric RNA genome into dsDNA in the cytoplasm, shortly after virus entry into the cell. This enzyme displays a DNA polymerase activity that can copy either DNA or RNA templates, and a ribonuclease H (RNase H) activity that cleaves the RNA strand of RNA-DNA heteroduplexes in a partially processive 3' to 5' endonucleasic mode. Conversion of viral genomic RNA into dsDNA requires many steps. A tRNA binds to the primer-binding site (PBS) situated at the 5'-end of the viral RNA. RT uses the 3' end of the tRNA primer to perform a short round of RNA-dependent minus-strand DNA synthesis. The reading proceeds through the U5 region and ends after the repeated (R) region which is present at both ends of viral RNA. The portion of the RNA-DNA heteroduplex is digested by the RNase H, resulting in a ssDNA product attached to the tRNA primer. This ssDNA/tRNA hybridizes with the identical R region situated at the 3' end of viral RNA. This template exchange, known as minus-strand DNA strong stop transfer, can be either intra- or intermolecular. RT uses the 3' end of this newly synthesized short ssDNA to perform the RNA-dependent minus-strand DNA synthesis of the whole template. RNase H digests the RNA template except for two polypurine tracts (PPTs) situated at the 5'-end and near the center of the genome. It is not clear if both polymerase and RNase H activities are simultaneous. RNase H can probably proceed both in a polymerase-dependent (RNA cut into small fragments by the same RT performing DNA synthesis) and a polymerase-independent mode (cleavage of remaining RNA fragments by free RTs). Secondly, RT performs DNA-directed plus-strand DNA synthesis using the PPTs that have not been removed by RNase H as primers. PPTs and tRNA primers are then removed by RNase H. The 3' and 5' ssDNA PBS regions hybridize to form a circular dsDNA intermediate. Strand displacement synthesis by RT to the PBS and PPT ends produces a blunt ended, linear dsDNA copy of the viral genome that includes long terminal repeats (LTRs) at both ends. In terms of biological role, integrase catalyzes viral DNA integration into the host chromosome, by performing a series of DNA cutting and joining reactions. This enzyme activity takes place after virion entry into a cell and reverse transcription of the RNA genome in dsDNA. The first step in the integration process is 3' processing. This step requires a complex comprising the viral genome, matrix protein, Vpr and integrase. This complex is called the pre-integration complex (PIC). The integrase protein removes 2 nucleotides from each 3' end of the viral DNA, leaving recessed CA OH's at the 3' ends. In the second step, the PIC enters cell nucleus. This process is mediated through integrase and Vpr proteins, and allows the virus to infect a non dividing cell. This ability to enter the nucleus is specific of lentiviruses, other retroviruses cannot and rely on cell division to access cell chromosomes. In the third step, termed strand transfer, the integrase protein joins the previously processed 3' ends to the 5' ends of strands of target cellular DNA at the site of integration. The 5'-ends are produced by integrase-catalyzed staggered cuts, 5 bp apart. A Y-shaped, gapped, recombination intermediate results, with the 5'-ends of the viral DNA strands and the 3' ends of target DNA strands remaining unjoined, flanking a gap of 5 bp. The last step is viral DNA integration into host chromosome. This involves host DNA repair synthesis in which the 5 bp gaps between the unjoined strands are filled in and then ligated. Since this process occurs at both cuts flanking the SIV genome, a 5 bp duplication of host DNA is produced at the ends of SIV integration. Alternatively, Integrase may catalyze the excision of viral DNA just after strand transfer, this is termed disintegration. In Cercopithecidae (Old World monkeys), this protein is Gag-Pol polyprotein (gag-pol).